The sequence spans 241 residues: Tetrahydromethanopterin S-methyltransferase subunit A (241 aa).

At 1–220 (MAEKKEPAEG…HSGVLAGKIE (220 aa)) the chain is on the cytoplasmic side. His-85 serves as a coordination point for 5-hydroxybenzimidazolylcob(I)amide. The helical transmembrane segment at 221-241 (GIMVGLVLSLFVLGLLLFGGM) threads the bilayer.

The protein belongs to the MtrA family. As to quaternary structure, the complex is composed of 8 subunits; MtrA, MtrB, MtrC, MtrD, MtrE, MtrF, MtrG and MtrH. Requires 5-hydroxybenzimidazolylcob(I)amide as cofactor.

It localises to the cell membrane. It carries out the reaction 5-methyl-5,6,7,8-tetrahydromethanopterin + coenzyme M + 2 Na(+)(in) = 5,6,7,8-tetrahydromethanopterin + methyl-coenzyme M + 2 Na(+)(out). It participates in one-carbon metabolism; methanogenesis from CO(2); methyl-coenzyme M from 5,10-methylene-5,6,7,8-tetrahydromethanopterin: step 2/2. Functionally, part of a complex that catalyzes the formation of methyl-coenzyme M and tetrahydromethanopterin from coenzyme M and methyl-tetrahydromethanopterin. This is an energy-conserving, sodium-ion translocating step. This is Tetrahydromethanopterin S-methyltransferase subunit A from Methanohalobium evestigatum (strain ATCC BAA-1072 / DSM 3721 / NBRC 107634 / OCM 161 / Z-7303).